The sequence spans 160 residues: 2-C-methyl-D-erythritol 2,4-cyclodiphosphate synthase (160 aa).

A divalent metal cation-binding residues include aspartate 9 and histidine 11. 4-CDP-2-C-methyl-D-erythritol 2-phosphate is bound by residues aspartate 9–histidine 11 and histidine 35–serine 36. Residue histidine 43 participates in a divalent metal cation binding. Residues aspartate 57–glycine 59, phenylalanine 62–aspartate 66, and phenylalanine 140 each bind 4-CDP-2-C-methyl-D-erythritol 2-phosphate.

The protein belongs to the IspF family. As to quaternary structure, homotrimer. A divalent metal cation is required as a cofactor.

It catalyses the reaction 4-CDP-2-C-methyl-D-erythritol 2-phosphate = 2-C-methyl-D-erythritol 2,4-cyclic diphosphate + CMP. The protein operates within isoprenoid biosynthesis; isopentenyl diphosphate biosynthesis via DXP pathway; isopentenyl diphosphate from 1-deoxy-D-xylulose 5-phosphate: step 4/6. Involved in the biosynthesis of isopentenyl diphosphate (IPP) and dimethylallyl diphosphate (DMAPP), two major building blocks of isoprenoid compounds. Catalyzes the conversion of 4-diphosphocytidyl-2-C-methyl-D-erythritol 2-phosphate (CDP-ME2P) to 2-C-methyl-D-erythritol 2,4-cyclodiphosphate (ME-CPP) with a corresponding release of cytidine 5-monophosphate (CMP). The polypeptide is 2-C-methyl-D-erythritol 2,4-cyclodiphosphate synthase (Fusobacterium nucleatum subsp. nucleatum (strain ATCC 25586 / DSM 15643 / BCRC 10681 / CIP 101130 / JCM 8532 / KCTC 2640 / LMG 13131 / VPI 4355)).